Reading from the N-terminus, the 132-residue chain is Ribosome-binding factor A (132 aa).

The protein belongs to the RbfA family. As to quaternary structure, monomer. Binds 30S ribosomal subunits, but not 50S ribosomal subunits or 70S ribosomes.

It is found in the cytoplasm. One of several proteins that assist in the late maturation steps of the functional core of the 30S ribosomal subunit. Associates with free 30S ribosomal subunits (but not with 30S subunits that are part of 70S ribosomes or polysomes). Required for efficient processing of 16S rRNA. May interact with the 5'-terminal helix region of 16S rRNA. The protein is Ribosome-binding factor A of Bordetella avium (strain 197N).